Consider the following 109-residue polypeptide: MNVLNKIALVTGGGTGIGKAASMELAKRGAIVAVNYSRSQSEAEETVEMIQKAGGQAFAIQADVSKNSDVQDMIQAIVNTHGTVDILVNNASITRHIPMDDLEAATEDV.

It belongs to the short-chain dehydrogenases/reductases (SDR) family.

The polypeptide is Short-chain dehydrogenase/reductase homolog YusS (yusS) (Bacillus subtilis (strain 168)).